The following is a 121-amino-acid chain: Large ribosomal subunit protein uL18 (121 aa).

Residues 1 to 19 are compositionally biased toward basic residues; that stretch reads MASKKVQKIRDKRKARVRA. Residues 1 to 23 form a disordered region; it reads MASKKVQKIRDKRKARVRAKISG.

It belongs to the universal ribosomal protein uL18 family. In terms of assembly, part of the 50S ribosomal subunit; part of the 5S rRNA/L5/L18/L25 subcomplex. Contacts the 5S and 23S rRNAs.

Functionally, this is one of the proteins that bind and probably mediate the attachment of the 5S RNA into the large ribosomal subunit, where it forms part of the central protuberance. In Syntrophus aciditrophicus (strain SB), this protein is Large ribosomal subunit protein uL18.